Reading from the N-terminus, the 88-residue chain is Putative membrane protein insertion efficiency factor (88 aa).

The protein belongs to the UPF0161 family.

The protein localises to the cell inner membrane. Could be involved in insertion of integral membrane proteins into the membrane. This is Putative membrane protein insertion efficiency factor from Prochlorococcus marinus (strain MIT 9313).